Reading from the N-terminus, the 287-residue chain is Protein REVEILLE 3 (287 aa).

In terms of domain architecture, HTH myb-type spans 56-110 (TITKSRENWTEQEHDKFLEALHLFDRDWKKIKAFVGSKTVIQIRSHAQKYFLKVQ). Residues 83–106 (WKKIKAFVGSKTVIQIRSHAQKYF) constitute a DNA-binding region (H-T-H motif). Positions 111–135 (KNGTKEHLPPPRPKRKANHPYPQKA) are disordered.

The protein resides in the nucleus. In terms of biological role, probable transcription factor. This chain is Protein REVEILLE 3 (RVE3), found in Arabidopsis thaliana (Mouse-ear cress).